A 184-amino-acid polypeptide reads, in one-letter code: Photosystem I assembly protein Ycf4 (184 aa).

2 helical membrane-spanning segments follow: residues 21–43 and 63–85; these read NFCW…ISSY and GLVM…CAIS.

It belongs to the Ycf4 family.

The protein resides in the plastid. It localises to the chloroplast thylakoid membrane. In terms of biological role, seems to be required for the assembly of the photosystem I complex. This Spinacia oleracea (Spinach) protein is Photosystem I assembly protein Ycf4.